The chain runs to 139 residues: Large ribosomal subunit protein bL21 (139 aa).

It belongs to the bacterial ribosomal protein bL21 family. In terms of assembly, part of the 50S ribosomal subunit. Contacts protein L20.

Functionally, this protein binds to 23S rRNA in the presence of protein L20. The chain is Large ribosomal subunit protein bL21 from Prochlorococcus marinus (strain NATL2A).